The following is a 405-amino-acid chain: L-rhamnonate dehydratase (405 aa).

His-33 and Arg-59 together coordinate substrate. Residues Asp-226, Glu-252, and Glu-280 each contribute to the Mg(2+) site. Catalysis depends on His-329, which acts as the Proton acceptor. Glu-349 provides a ligand contact to substrate.

This sequence belongs to the mandelate racemase/muconate lactonizing enzyme family. RhamD subfamily. Homooctamer; tetramer of dimers. It depends on Mg(2+) as a cofactor.

It carries out the reaction L-rhamnonate = 2-dehydro-3-deoxy-L-rhamnonate + H2O. Its function is as follows. Catalyzes the dehydration of L-rhamnonate to 2-keto-3-deoxy-L-rhamnonate (KDR). The polypeptide is L-rhamnonate dehydratase (Salmonella paratyphi C (strain RKS4594)).